Reading from the N-terminus, the 153-residue chain is Bacteriohemerythrin (153 aa).

Fe cation-binding residues include H21, H57, E61, H76, H80, H115, and D120.

Belongs to the hemerythrin family. As to quaternary structure, monomer.

Functionally, oxygen-binding protein. May be involved in a storage mechanism or for delivery to oxygen-requiring enzymes. The oxygen-binding site contains two iron atoms. The polypeptide is Bacteriohemerythrin (Pseudomonas aeruginosa (strain UCBPP-PA14)).